A 264-amino-acid chain; its full sequence is Forkhead box protein pes-1 (264 aa).

Disordered regions lie at residues Asp15–Lys36 and Asp50–Arg93. The segment covering Asp50–Ser64 has biased composition (low complexity). The segment covering Glu70 to Ser89 has biased composition (polar residues). Positions Arg93 to Arg186 form a DNA-binding region, fork-head.

The protein localises to the nucleus. It localises to the cytoplasm. Transcription factor. Plays a role in embryogenesis and later development, perhaps acting redundantly with forkhead protein fkh-2. The chain is Forkhead box protein pes-1 from Caenorhabditis elegans.